A 226-amino-acid polypeptide reads, in one-letter code: MGIRAIVVDTAGTTTDLNFIQDVLFPYSVKALPDFLEQNQHNVLVENCICDTKDIALEPEADLARVTEILQQWVNEDRKATPLKTLQGLIWKQGYAHGEFKGHIFPDFIEAVKRFSAQNLRIYSFSSGSVDAQKLLFSHSDGGDLTEMFNGHFDTRTGNKLDKQAYCNILNTISLSPKQVLFVSDVIEELKAADAAGMMTCQMVRDSKQRTGEFHKISSFDELLIE.

Belongs to the HAD-like hydrolase superfamily. MasA/MtnC family. In terms of assembly, monomer. Mg(2+) is required as a cofactor.

It catalyses the reaction 5-methylsulfanyl-2,3-dioxopentyl phosphate + H2O = 1,2-dihydroxy-5-(methylsulfanyl)pent-1-en-3-one + phosphate. It participates in amino-acid biosynthesis; L-methionine biosynthesis via salvage pathway; L-methionine from S-methyl-5-thio-alpha-D-ribose 1-phosphate: step 3/6. It functions in the pathway amino-acid biosynthesis; L-methionine biosynthesis via salvage pathway; L-methionine from S-methyl-5-thio-alpha-D-ribose 1-phosphate: step 4/6. Functionally, bifunctional enzyme that catalyzes the enolization of 2,3-diketo-5-methylthiopentyl-1-phosphate (DK-MTP-1-P) into the intermediate 2-hydroxy-3-keto-5-methylthiopentenyl-1-phosphate (HK-MTPenyl-1-P), which is then dephosphorylated to form the acireductone 1,2-dihydroxy-3-keto-5-methylthiopentene (DHK-MTPene). The sequence is that of Enolase-phosphatase E1 from Shewanella sp. (strain W3-18-1).